Here is a 305-residue protein sequence, read N- to C-terminus: UDP-3-O-acyl-N-acetylglucosamine deacetylase (305 aa).

Zn(2+) contacts are provided by His-79, His-238, and Asp-242. His-265 (proton donor) is an active-site residue.

The protein belongs to the LpxC family. Requires Zn(2+) as cofactor.

It carries out the reaction a UDP-3-O-[(3R)-3-hydroxyacyl]-N-acetyl-alpha-D-glucosamine + H2O = a UDP-3-O-[(3R)-3-hydroxyacyl]-alpha-D-glucosamine + acetate. The protein operates within glycolipid biosynthesis; lipid IV(A) biosynthesis; lipid IV(A) from (3R)-3-hydroxytetradecanoyl-[acyl-carrier-protein] and UDP-N-acetyl-alpha-D-glucosamine: step 2/6. Functionally, catalyzes the hydrolysis of UDP-3-O-myristoyl-N-acetylglucosamine to form UDP-3-O-myristoylglucosamine and acetate, the committed step in lipid A biosynthesis. This chain is UDP-3-O-acyl-N-acetylglucosamine deacetylase, found in Erwinia tasmaniensis (strain DSM 17950 / CFBP 7177 / CIP 109463 / NCPPB 4357 / Et1/99).